The primary structure comprises 395 residues: Nucleoside diphosphate kinase homolog 7 (395 aa).

The DM10 domain occupies 22–110 (QSERFAFIAE…YTARQLGSRK (89 aa)).

It belongs to the NDK family. Component of sperm flagellar doublet microtubules. Component of the gamma-tubulin ring complex.

The protein resides in the cytoplasm. Its subcellular location is the cytoskeleton. The protein localises to the microtubule organizing center. It localises to the centrosome. It is found in the nucleus. The protein resides in the spindle. Its subcellular location is the cilium axoneme. The protein localises to the flagellum axoneme. It localises to the cell projection. It is found in the cilium. Functionally, possesses an intrinsic kinase activity. Displays 3'-5' exonuclease activity with a preference for single-stranded DNA. Does not seem to have nucleoside diphosphate kinase activity. Functional component of the gamma-tubulin ring complex, implicated in the regulation of the microtubule-nucleating activity of the gamma-tubulin ring complex in centrosomes, in a kinase activity-dependent manner. Part of the dynein-decorated doublet microtubules (DMTs) in cilia axoneme, which is required for motile cilia beating. In Mus musculus (Mouse), this protein is Nucleoside diphosphate kinase homolog 7.